The chain runs to 363 residues: NAD kinase 1 (363 aa).

Residue Asp68 is the Proton acceptor of the active site. NAD(+) is bound by residues 68–69, Arg73, 175–176, Arg186, Asp205, Ala240, and Gln275; these read DG and ND.

It belongs to the NAD kinase family. It depends on a divalent metal cation as a cofactor.

Its subcellular location is the cytoplasm. The catalysed reaction is NAD(+) + ATP = ADP + NADP(+) + H(+). Functionally, involved in the regulation of the intracellular balance of NAD and NADP, and is a key enzyme in the biosynthesis of NADP. Catalyzes specifically the phosphorylation on 2'-hydroxyl of the adenosine moiety of NAD to yield NADP. This Streptomyces coelicolor (strain ATCC BAA-471 / A3(2) / M145) protein is NAD kinase 1.